We begin with the raw amino-acid sequence, 157 residues long: uncharacterized protein (157 aa).

The chain crosses the membrane as a helical span at residues 6–26 (LVGGVLRVLVVVGAVFDVAVL). The Ricin B-type lectin domain maps to 33–157 (ADGPVQLKSR…APDQQWDSVP (125 aa)).

It localises to the membrane. This is an uncharacterized protein from Mycobacterium tuberculosis (strain CDC 1551 / Oshkosh).